The sequence spans 293 residues: DNA-directed RNA polymerase III subunit rpc6 (293 aa).

It belongs to the eukaryotic RPC34/RPC39 RNA polymerase subunit family. Component of the RNA polymerase III (Pol III) complex.

The protein localises to the nucleus. In terms of biological role, DNA-dependent RNA polymerase catalyzes the transcription of DNA into RNA using the four ribonucleoside triphosphates as substrates. Specific peripheric component of RNA polymerase III which synthesizes small RNAs, such as 5S rRNA and tRNAs. May direct RNA Pol III binding to the TFIIIB-DNA complex. The protein is DNA-directed RNA polymerase III subunit rpc6 (polr3f) of Dictyostelium discoideum (Social amoeba).